The primary structure comprises 280 residues: Eukaryotic translation initiation factor 3 subunit F-1 (280 aa).

Positions 8–138 (VRVHPVVLFQ…LRAYVCIQLG (131 aa)) constitute an MPN domain.

It belongs to the eIF-3 subunit F family. As to quaternary structure, component of the eukaryotic translation initiation factor 3 (eIF-3) complex. The eIF-3 complex interacts with pix.

It is found in the cytoplasm. Functionally, component of the eukaryotic translation initiation factor 3 (eIF-3) complex, which is involved in protein synthesis of a specialized repertoire of mRNAs and, together with other initiation factors, stimulates binding of mRNA and methionyl-tRNAi to the 40S ribosome. The eIF-3 complex specifically targets and initiates translation of a subset of mRNAs involved in cell proliferation. This Drosophila erecta (Fruit fly) protein is Eukaryotic translation initiation factor 3 subunit F-1.